The sequence spans 200 residues: Pyridoxal 5'-phosphate synthase subunit PdxT (200 aa).

52–54 (GES) contributes to the L-glutamine binding site. Cysteine 84 acts as the Nucleophile in catalysis. L-glutamine is bound by residues arginine 116 and 145 to 146 (IR). Active-site charge relay system residues include histidine 181 and glutamate 183.

Belongs to the glutaminase PdxT/SNO family. In terms of assembly, in the presence of PdxS, forms a dodecamer of heterodimers. Only shows activity in the heterodimer.

The catalysed reaction is aldehydo-D-ribose 5-phosphate + D-glyceraldehyde 3-phosphate + L-glutamine = pyridoxal 5'-phosphate + L-glutamate + phosphate + 3 H2O + H(+). The enzyme catalyses L-glutamine + H2O = L-glutamate + NH4(+). It participates in cofactor biosynthesis; pyridoxal 5'-phosphate biosynthesis. Catalyzes the hydrolysis of glutamine to glutamate and ammonia as part of the biosynthesis of pyridoxal 5'-phosphate. The resulting ammonia molecule is channeled to the active site of PdxS. In Saccharolobus islandicus (strain M.16.27) (Sulfolobus islandicus), this protein is Pyridoxal 5'-phosphate synthase subunit PdxT.